The primary structure comprises 209 residues: MVSDNSGNLYIVAAPSGGGKTSLVKKLIEMVGEIEVSVSHTTRPMRPGEKEGVDYFFIDEEQFISMVNEGAFIEHAKVFNHWYGTSVAQINKRLQFGIDVVLDIDWQGAEQIRHSYPDAVSVFIIPPSLDTLKERLMNRRQDKDNVISERMTKAQDELGHYPEFDYLIVNDDFEKAAMELQSIVIANRLRIEKQVNKQAKLLSFLLSSQ.

Residues 7–185 (GNLYIVAAPS…AAMELQSIVI (179 aa)) enclose the Guanylate kinase-like domain. An ATP-binding site is contributed by 14–21 (APSGGGKT).

The protein belongs to the guanylate kinase family.

It is found in the cytoplasm. The catalysed reaction is GMP + ATP = GDP + ADP. In terms of biological role, essential for recycling GMP and indirectly, cGMP. In Legionella pneumophila (strain Paris), this protein is Guanylate kinase.